We begin with the raw amino-acid sequence, 401 residues long: tRNA(Ile)-lysidine synthase (401 aa).

17-22 (SGGPDS) is an ATP binding site.

The protein belongs to the tRNA(Ile)-lysidine synthase family.

Its subcellular location is the cytoplasm. It catalyses the reaction cytidine(34) in tRNA(Ile2) + L-lysine + ATP = lysidine(34) in tRNA(Ile2) + AMP + diphosphate + H(+). Its function is as follows. Ligates lysine onto the cytidine present at position 34 of the AUA codon-specific tRNA(Ile) that contains the anticodon CAU, in an ATP-dependent manner. Cytidine is converted to lysidine, thus changing the amino acid specificity of the tRNA from methionine to isoleucine. This is tRNA(Ile)-lysidine synthase from Mycoplasma mycoides subsp. mycoides SC (strain CCUG 32753 / NCTC 10114 / PG1).